Here is a 103-residue protein sequence, read N- to C-terminus: Small ribosomal subunit protein uS10 (103 aa).

This sequence belongs to the universal ribosomal protein uS10 family. Part of the 30S ribosomal subunit.

Involved in the binding of tRNA to the ribosomes. The polypeptide is Small ribosomal subunit protein uS10 (Polynucleobacter asymbioticus (strain DSM 18221 / CIP 109841 / QLW-P1DMWA-1) (Polynucleobacter necessarius subsp. asymbioticus)).